A 156-amino-acid polypeptide reads, in one-letter code: Small ribosomal subunit protein uS7 (156 aa).

It belongs to the universal ribosomal protein uS7 family. In terms of assembly, part of the 30S ribosomal subunit. Contacts proteins S9 and S11.

Functionally, one of the primary rRNA binding proteins, it binds directly to 16S rRNA where it nucleates assembly of the head domain of the 30S subunit. Is located at the subunit interface close to the decoding center, probably blocks exit of the E-site tRNA. The polypeptide is Small ribosomal subunit protein uS7 (Synechococcus sp. (strain CC9311)).